The primary structure comprises 62 residues: Potassium channel toxin alpha-KTx 10.1 (62 aa).

A signal peptide spans 1 to 22 (MEGIAKITLILLFLFVTMHTFA). Positions 23 to 28 (NWNTEA) are excised as a propeptide. Intrachain disulfides connect Cys-31–Cys-50, Cys-36–Cys-55, and Cys-40–Cys-57. A Tyrosine amide modification is found at Tyr-60.

It belongs to the short scorpion toxin superfamily. Potassium channel inhibitor family. Alpha-KTx 10 subfamily. In terms of tissue distribution, expressed by the venom gland.

It localises to the secreted. In terms of biological role, blocks Shaker B (Sh) and voltage-gated potassium-channels Kv1.1/KCNA1, Kv1.2/KCNA2, Kv1.3/KCNA3. Also inhibits small conductance calcium-activated potassium channels (KCNN) and intermediate conductance calcium-activated potassium channel (KCa3.1/KCNN4). This Centruroides noxius (Mexican scorpion) protein is Potassium channel toxin alpha-KTx 10.1.